A 441-amino-acid chain; its full sequence is Dolichyl-diphosphooligosaccharide--protein glycosyltransferase 48 kDa subunit (441 aa).

The signal sequence occupies residues methionine 1–glycine 28. At aspartate 29–alanine 410 the chain is on the lumenal side. The chain crosses the membrane as a helical span at residues phenylalanine 411–phenylalanine 431. The Cytoplasmic segment spans residues leucine 432 to aspartate 441.

The protein belongs to the DDOST 48 kDa subunit family. As to quaternary structure, component of the oligosaccharyltransferase (OST) complex.

The protein resides in the endoplasmic reticulum membrane. Its pathway is protein modification; protein glycosylation. Functionally, subunit of the oligosaccharyl transferase (OST) complex that catalyzes the initial transfer of a defined glycan (Glc(3)Man(9)GlcNAc(2) in eukaryotes) from the lipid carrier dolichol-pyrophosphate to an asparagine residue within an Asn-X-Ser/Thr consensus motif in nascent polypeptide chains, the first step in protein N-glycosylation. N-glycosylation occurs cotranslationally and the complex associates with the Sec61 complex at the channel-forming translocon complex that mediates protein translocation across the endoplasmic reticulum (ER). All subunits are required for a maximal enzyme activity. Required for the assembly of both SST3A- and SS3B-containing OST complexes. The polypeptide is Dolichyl-diphosphooligosaccharide--protein glycosyltransferase 48 kDa subunit (Danio rerio (Zebrafish)).